The primary structure comprises 170 residues: Large ribosomal subunit protein uL5 (170 aa).

Belongs to the universal ribosomal protein uL5 family. Component of the large ribosomal subunit.

The protein localises to the nucleus. The protein resides in the cytoplasm. Its function is as follows. Component of the ribosome, a large ribonucleoprotein complex responsible for the synthesis of proteins in the cell. The small ribosomal subunit (SSU) binds messenger RNAs (mRNAs) and translates the encoded message by selecting cognate aminoacyl-transfer RNA (tRNA) molecules. The large subunit (LSU) contains the ribosomal catalytic site termed the peptidyl transferase center (PTC), which catalyzes the formation of peptide bonds, thereby polymerizing the amino acids delivered by tRNAs into a polypeptide chain. The nascent polypeptides leave the ribosome through a tunnel in the LSU and interact with protein factors that function in enzymatic processing, targeting, and the membrane insertion of nascent chains at the exit of the ribosomal tunnel. In Chlamydomonas reinhardtii (Chlamydomonas smithii), this protein is Large ribosomal subunit protein uL5 (RPL11).